The following is a 194-amino-acid chain: MLEQLMEALRCLPGVGPKSAQRMAFHLLQRDRKGGLQLADALSQAMTEIGHCTECRTFTEEEVCHICTNPKRQENGQICVVESPADIAAVEATGQYSGRYFVLMGHLSPLDGIGPSDIGLDVLDYRLRRGDISEVILATNPTVEGEATAHYIAELCKEHQVEASRIAHGVPVGGELELVDGTTLSHSLLGRHKI.

The C4-type zinc-finger motif lies at 52–67 (CTECRTFTEEEVCHIC). In terms of domain architecture, Toprim spans 76–171 (GQICVVESPA…EASRIAHGVP (96 aa)).

Belongs to the RecR family.

In terms of biological role, may play a role in DNA repair. It seems to be involved in an RecBC-independent recombinational process of DNA repair. It may act with RecF and RecO. This Vibrio campbellii (strain ATCC BAA-1116) protein is Recombination protein RecR.